We begin with the raw amino-acid sequence, 118 residues long: ATP-dependent Clp protease adapter protein ClpS (118 aa).

The interval 1–24 is disordered; sequence MNGSSNSGSPGGGQTGDDDGTGFD.

Belongs to the ClpS family. In terms of assembly, binds to the N-terminal domain of the chaperone ClpA.

Functionally, involved in the modulation of the specificity of the ClpAP-mediated ATP-dependent protein degradation. The protein is ATP-dependent Clp protease adapter protein ClpS of Hyphomonas neptunium (strain ATCC 15444).